The chain runs to 875 residues: Peptidyl-glycine alpha-amidating monooxygenase B (875 aa).

The first 39 residues, 1–39 (MDMASLISSLLVLFLIFQNSCYCFRSPLSVFKRYEESTR), serve as a signal peptide directing secretion. The peptidylglycine alpha-hydroxylating monooxygenase stretch occupies residues 3-394 (MASLISSLLV…KREEEEVLNQ (392 aa)). Residues 40-763 (SLSNDCLGTT…PSVVQESSAG (724 aa)) are Intragranular-facing. 5 disulfides stabilise this stretch: cysteine 45-cysteine 184, cysteine 79-cysteine 124, cysteine 112-cysteine 129, cysteine 225-cysteine 332, and cysteine 291-cysteine 313. Positions 105 and 106 each coordinate Cu(2+). Cu(2+) is bound by residues histidine 170, histidine 240, histidine 242, and methionine 312. The peptidyl-alpha-hydroxyglycine alpha-amidating lyase stretch occupies residues 395 to 716 (DVHLEEDTDW…SPSKAEHRSV (322 aa)). Arginine 430 is an a protein binding site. N-linked (GlcNAc...) asparagine glycosylation occurs at asparagine 465. NHL repeat units follow at residues 467–508 (SKVL…VGAE), 516–561 (LGRA…FSPN), and 569–613 (GEET…FHAK). Cystine bridges form between cysteine 530–cysteine 551 and cysteine 598–cysteine 609. A protein contacts are provided by tyrosine 550 and arginine 602. Residue asparagine 662 is glycosylated (N-linked (GlcNAc...) asparagine). Residues 666 to 709 (GDILDTFIPARKNFEMPHDIAAGDDGTVYVGDAHANAVWKFSPS) form an NHL 4 repeat. Positions 735-755 (HMRSRPKTNESVGQQTQEKPS) are disordered. N-linked (GlcNAc...) asparagine glycosylation is present at asparagine 743. Positions 743–755 (NESVGQQTQEKPS) are enriched in polar residues. A helical membrane pass occupies residues 764–787 (VSFVLIITLLIIPVVVLIAIAIFI). Residues 788-875 (RWRKVRMYGG…APPIPPVSSS (88 aa)) lie on the Cytoplasmic side of the membrane. The disordered stretch occupies residues 837–875 (KGFDRLSTEGSDQEKDDDDDGSDSEEEYSAPPIPPVSSS). Acidic residues predominate over residues 850 to 864 (EKDDDDDGSDSEEEY).

This sequence in the C-terminal section; belongs to the peptidyl-alpha-hydroxyglycine alpha-amidating lyase family. It in the N-terminal section; belongs to the copper type II ascorbate-dependent monooxygenase family. As to quaternary structure, monomer. The cofactor is Zn(2+). Cu(2+) serves as cofactor.

It is found in the cytoplasmic vesicle. Its subcellular location is the secretory vesicle membrane. It catalyses the reaction a [peptide]-C-terminal glycine + 2 L-ascorbate + O2 = a [peptide]-C-terminal (2S)-2-hydroxyglycine + 2 monodehydro-L-ascorbate radical + H2O. The catalysed reaction is a [peptide]-C-terminal (2S)-2-hydroxyglycine = a [peptide]-C-terminal amide + glyoxylate. In terms of biological role, bifunctional enzyme that catalyzes amidation of the C-terminus of proteins. Alpha-amidation is present at the C-terminus of many endocrine hormones and neuropeptides and is required for their activity. C-terminal amidation also takes place in response to protein fragmentation triggered by oxidative stress, promoting degradation of amidated protein fragments by the proteasome. Alpha-amidation involves two sequential reactions, both of which are catalyzed by separate catalytic domains of the enzyme. The first step, catalyzed by peptidyl alpha-hydroxylating monooxygenase (PHM) domain, is the copper-, ascorbate-, and O2- dependent stereospecific hydroxylation (with S stereochemistry) at the alpha-carbon (C-alpha) of the C-terminal glycine of the peptidylglycine substrate. The second step, catalyzed by the peptidylglycine amidoglycolate lyase (PAL) domain, is the zinc-dependent cleavage of the N-C-alpha bond, producing the alpha-amidated peptide and glyoxylate. This is Peptidyl-glycine alpha-amidating monooxygenase B (pam-b) from Xenopus laevis (African clawed frog).